The sequence spans 240 residues: Putative RING finger protein ORF96 (240 aa).

The RING-type 1 zinc-finger motif lies at 9–44; that stretch reads CVVCMEEKPLVVFEPCMHHNCCESCSGHVSNCPYCR. The RING-type 2; degenerate zinc finger occupies 150–202; sequence CVICKKEIKEEVGKTYMHACCTATICKPCAKAILKAMVEKEITENLPFCPYCF.

The sequence is that of Putative RING finger protein ORF96 from Ostreid herpesvirus 1 (isolate France) (OsHV-1).